The following is a 286-amino-acid chain: Nucleotide-binding protein APL_0334 (286 aa).

8–15 (GRSGSGKS) contacts ATP. A GTP-binding site is contributed by 56 to 59 (DIRN).

The protein belongs to the RapZ-like family.

Functionally, displays ATPase and GTPase activities. The chain is Nucleotide-binding protein APL_0334 from Actinobacillus pleuropneumoniae serotype 5b (strain L20).